Consider the following 206-residue polypeptide: Guanylate kinase (206 aa).

Positions 5 to 183 (FNLLILSGPS…SKEIILSIAK (179 aa)) constitute a Guanylate kinase-like domain. Residue 12-19 (GPSGAGKS) participates in ATP binding.

The protein belongs to the guanylate kinase family.

It localises to the cytoplasm. The catalysed reaction is GMP + ATP = GDP + ADP. Its function is as follows. Essential for recycling GMP and indirectly, cGMP. This Helicobacter pylori (strain ATCC 700392 / 26695) (Campylobacter pylori) protein is Guanylate kinase (gmk).